We begin with the raw amino-acid sequence, 557 residues long: Cytochrome P450 734A2 (557 aa).

A helical transmembrane segment spans residues Trp-13–Ala-35. Heme is bound at residue Cys-495.

Belongs to the cytochrome P450 family. The cofactor is heme. Expressed in roots, shoot apex, leaf sheaths and leaf blades.

It localises to the membrane. Functionally, cytochrome P450 involved in brassinosteroids (BRs) inactivation and regulation of BRs homeostasis. Is a multifunctional and multisubstrate enzyme that controls the endogenous bioactive BR content both by direct inactivation of castasterone (CS) and by decreasing the levels of BR precursors. Catalyzes the oxidation of carbon 22 hydroxylated BR intermediates to produce C26 oxidized metabolites. This is Cytochrome P450 734A2 (CYP734A2) from Oryza sativa subsp. japonica (Rice).